Consider the following 89-residue polypeptide: Small ribosomal subunit protein uS14 (89 aa).

The protein belongs to the universal ribosomal protein uS14 family. In terms of assembly, part of the 30S ribosomal subunit. Contacts proteins S3 and S10.

Its function is as follows. Binds 16S rRNA, required for the assembly of 30S particles and may also be responsible for determining the conformation of the 16S rRNA at the A site. The sequence is that of Small ribosomal subunit protein uS14 from Porphyromonas gingivalis (strain ATCC 33277 / DSM 20709 / CIP 103683 / JCM 12257 / NCTC 11834 / 2561).